A 995-amino-acid polypeptide reads, in one-letter code: Bifunctional glutamine synthetase adenylyltransferase/adenylyl-removing enzyme (995 aa).

An adenylyl removase region spans residues 1–487 (MNVTKPATQR…LHAKLFYQPL (487 aa)). The interval 492–995 (APAGLEIAGR…KAVVRKVFGS (504 aa)) is adenylyl transferase.

It belongs to the GlnE family. Requires Mg(2+) as cofactor.

It carries out the reaction [glutamine synthetase]-O(4)-(5'-adenylyl)-L-tyrosine + phosphate = [glutamine synthetase]-L-tyrosine + ADP. The catalysed reaction is [glutamine synthetase]-L-tyrosine + ATP = [glutamine synthetase]-O(4)-(5'-adenylyl)-L-tyrosine + diphosphate. In terms of biological role, involved in the regulation of glutamine synthetase GlnA, a key enzyme in the process to assimilate ammonia. When cellular nitrogen levels are high, the C-terminal adenylyl transferase (AT) inactivates GlnA by covalent transfer of an adenylyl group from ATP to specific tyrosine residue of GlnA, thus reducing its activity. Conversely, when nitrogen levels are low, the N-terminal adenylyl removase (AR) activates GlnA by removing the adenylyl group by phosphorolysis, increasing its activity. The regulatory region of GlnE binds the signal transduction protein PII (GlnB) which indicates the nitrogen status of the cell. The sequence is that of Bifunctional glutamine synthetase adenylyltransferase/adenylyl-removing enzyme from Mycobacterium marinum (strain ATCC BAA-535 / M).